The primary structure comprises 264 residues: 4-hydroxy-tetrahydrodipicolinate reductase (264 aa).

8–13 (GPRGKM) lines the NAD(+) pocket. Lysine 36 contributes to the NADP(+) binding site. NAD(+) contacts are provided by residues 97–99 (GTT) and 123–126 (APNF). Histidine 153 functions as the Proton donor/acceptor in the catalytic mechanism. (S)-2,3,4,5-tetrahydrodipicolinate is bound at residue histidine 154. Lysine 157 serves as the catalytic Proton donor. 163–164 (GT) lines the (S)-2,3,4,5-tetrahydrodipicolinate pocket.

This sequence belongs to the DapB family.

The protein resides in the cytoplasm. It carries out the reaction (S)-2,3,4,5-tetrahydrodipicolinate + NAD(+) + H2O = (2S,4S)-4-hydroxy-2,3,4,5-tetrahydrodipicolinate + NADH + H(+). It catalyses the reaction (S)-2,3,4,5-tetrahydrodipicolinate + NADP(+) + H2O = (2S,4S)-4-hydroxy-2,3,4,5-tetrahydrodipicolinate + NADPH + H(+). It functions in the pathway amino-acid biosynthesis; L-lysine biosynthesis via DAP pathway; (S)-tetrahydrodipicolinate from L-aspartate: step 4/4. Functionally, catalyzes the conversion of 4-hydroxy-tetrahydrodipicolinate (HTPA) to tetrahydrodipicolinate. The chain is 4-hydroxy-tetrahydrodipicolinate reductase from Halalkalibacterium halodurans (strain ATCC BAA-125 / DSM 18197 / FERM 7344 / JCM 9153 / C-125) (Bacillus halodurans).